Reading from the N-terminus, the 205-residue chain is Ribosomal RNA small subunit methyltransferase G (205 aa).

S-adenosyl-L-methionine-binding positions include G66, F71, 119 to 120 (IE), and R135.

This sequence belongs to the methyltransferase superfamily. RNA methyltransferase RsmG family.

It localises to the cytoplasm. It carries out the reaction guanosine(527) in 16S rRNA + S-adenosyl-L-methionine = N(7)-methylguanosine(527) in 16S rRNA + S-adenosyl-L-homocysteine. Its function is as follows. Specifically methylates the N7 position of guanine in position 527 of 16S rRNA. The polypeptide is Ribosomal RNA small subunit methyltransferase G (Rhizobium etli (strain CIAT 652)).